Consider the following 340-residue polypeptide: MTSRTTTATELDEIYTFAVQLGKDAGNLLMEAARLRFSNNNANHDKESTTQEFTEKDSAVDIVTQTDEDVEAFIKSAINTRYPSHDFIGEETYAKSSQSTRPYLVTHTTPTWVVDPLDGTVNYTHLFPMFCVSIAFLVDGTPVIGVICAPMLGQLFTACKGRGAWLNETQRLPLVRQPMPKSAPGGCVFSCEWGKDRKDRPEGNLYRKVESFVNMAAEVGGRGGKGGMVHGVRSLGSATLDLAYTAMGSFDIWWEGGCWEWDVAAGIAILQEAGGLITSANPPEDWATAEIPDVKLGSRLYLVVRPAGPSEGETAREGQERTIREVWRRVRALDYTRPGA.

Residues glutamate 90, aspartate 115, leucine 117, aspartate 118, and aspartate 262 each contribute to the Mg(2+) site. Glutamate 90 lines the substrate pocket. Residues 117–120 (LDGT) and aspartate 262 contribute to the substrate site.

Belongs to the inositol monophosphatase superfamily.

Part of the qa gene cluster that mediates the catabolism of quinic acid (QA) and as such, allows the use of QA as a sole carbon source. Its function within the pathway has not been determined yet but it probably plays a regulatory role. The qa cluster encodes 3 inducible enymes (qa-2, qa-3 and qa-4) catalyzing the first three reactions in the catabolism of quinic acid to protocatechuic acid (also known as 3,4-Dihydroxybenzoic acid). This Neurospora crassa (strain ATCC 24698 / 74-OR23-1A / CBS 708.71 / DSM 1257 / FGSC 987) protein is Quinic acid degradation cluster protein x.